The sequence spans 259 residues: MADS-box protein ZMM17 (259 aa).

In terms of domain architecture, MADS-box spans 1-61 (MGRGKIEIKR…GKMFEYCSPA (61 aa)). One can recognise a K-box domain in the interval 85–175 (DQQILLEMTR…YRMINENQQA (91 aa)). Residues 237 to 259 (PTQPNLQDPAAPCGGLHGHGLQL) are disordered.

In terms of tissue distribution, strong expression in female inflorescences (ears), but also weak expression in male inflorescences (tassels). At early stages of the development of the female spiklet, expressed in all organ primordia but later restricted to the ovule and the developing silk. At very late stages of development, expression becomes restricted to parts of the silk.

Its subcellular location is the nucleus. In terms of biological role, probable transcription factor. This is MADS-box protein ZMM17 (M17) from Zea mays (Maize).